Reading from the N-terminus, the 368-residue chain is tRNA/tmRNA (uracil-C(5))-methyltransferase (368 aa).

Residues Q186, Y214, N219, E235, and D295 each contribute to the S-adenosyl-L-methionine site. The Nucleophile role is filled by C320. E354 serves as the catalytic Proton acceptor.

Belongs to the class I-like SAM-binding methyltransferase superfamily. RNA M5U methyltransferase family. TrmA subfamily.

It carries out the reaction uridine(54) in tRNA + S-adenosyl-L-methionine = 5-methyluridine(54) in tRNA + S-adenosyl-L-homocysteine + H(+). The catalysed reaction is uridine(341) in tmRNA + S-adenosyl-L-methionine = 5-methyluridine(341) in tmRNA + S-adenosyl-L-homocysteine + H(+). Its function is as follows. Dual-specificity methyltransferase that catalyzes the formation of 5-methyluridine at position 54 (m5U54) in all tRNAs, and that of position 341 (m5U341) in tmRNA (transfer-mRNA). This Aromatoleum aromaticum (strain DSM 19018 / LMG 30748 / EbN1) (Azoarcus sp. (strain EbN1)) protein is tRNA/tmRNA (uracil-C(5))-methyltransferase.